Here is a 375-residue protein sequence, read N- to C-terminus: Actin, cytoplasmic (375 aa).

The protein belongs to the actin family.

The protein localises to the cytoplasm. It is found in the cytoskeleton. It carries out the reaction ATP + H2O = ADP + phosphate + H(+). Functionally, actins are highly conserved proteins that are involved in various types of cell motility and are ubiquitously expressed in all eukaryotic cells. This chain is Actin, cytoplasmic, found in Sterkiella nova (Ciliate).